We begin with the raw amino-acid sequence, 536 residues long: Quinate permease (536 aa).

Residues 1–26 (MTLLALKEDRPTPKAVYNWRVYTCAA) are Cytoplasmic-facing. The chain crosses the membrane as a helical span at residues 27–47 (IASFASCMIGYDSSFIGTTLA). Over 48–74 (LPSFTKEFDFASYTPGALALLQSNIVS) the chain is Extracellular. A helical membrane pass occupies residues 75-95 (VYQAGAFFGSLFAFATSYFLG). Residues 96–98 (RRR) are Cytoplasmic-facing. A helical membrane pass occupies residues 99 to 119 (SLIAFSVVFIIGAAIMLAADG). Topologically, residues 120-131 (QRRGVDPIIAGR) are extracellular. A helical membrane pass occupies residues 132–152 (VLAGIGVGGASNMVPIYISEL). Residues 153 to 160 (APPAVRGR) are Cytoplasmic-facing. Residues 161–181 (LVGIYELGWQIGGLVGFWINY) form a helical membrane-spanning segment. Residues 182–195 (GVNTTMAPTRSQWL) are Extracellular-facing. Asn-184 carries an N-linked (GlcNAc...) asparagine glycan. Residues 196–216 (IPFAVQLIPAGLLFLGSFWIP) form a helical membrane-spanning segment. At 217–285 (ESPRWLFANG…SLKQPKVRWR (69 aa)) the chain is on the cytoplasmic side. A helical membrane pass occupies residues 286–306 (FFLGGMLFLWQNGSGINAINY). The Extracellular portion of the chain corresponds to 307–327 (YSPTVFRSIGITGTNTGFLTT). The helical transmembrane segment at 328–349 (GIFGVVKMVLTIIWLLWLVDLV) threads the bilayer. Residues 350 to 352 (GRR) are Cytoplasmic-facing. A helical transmembrane segment spans residues 353–373 (RILFVGATGGSLCMWFIGAYI). At 374-389 (KIAGPGTTKTEEAKLT) the chain is on the extracellular side. Residues 390–410 (SGGIAAIFFFYLWTAFYTPSW) form a helical membrane-spanning segment. Over 411–435 (NGTPWVINSEMFDQNTRSLGQASAA) the chain is Cytoplasmic. A helical transmembrane segment spans residues 436-456 (ANNWFWNFIISRFTPQMFIKM). The Extracellular portion of the chain corresponds to 457–458 (EY). The helical transmembrane segment at 459–479 (GVYFFFASLMLLSVVFIYFFI) threads the bilayer. The Cytoplasmic segment spans residues 480–536 (PETKSIPLEAMDRLFAIKSVHNANKILMDELNFDRNPEREQSSLDEKDRVTQTENAV). The segment covering 516–530 (PEREQSSLDEKDRVT) has biased composition (basic and acidic residues). The disordered stretch occupies residues 516–536 (PEREQSSLDEKDRVTQTENAV).

This sequence belongs to the major facilitator superfamily. Sugar transporter (TC 2.A.1.1) family.

The protein resides in the membrane. This is Quinate permease (qa-y) from Neurospora africana.